Here is a 142-residue protein sequence, read N- to C-terminus: MKTFTAKPETVKRDWFVVDAAGQTLGRLATEIASRLRGKHKPEYTPHVDTGDYIVVINAEQIRVTGAKTTDKIYYSHSGFPGGIKSINFEKLIAKAPERVIETAVKGMLPKNPLGRDMYRKLKVYAGAVHPHTAQQPQELKF.

It belongs to the universal ribosomal protein uL13 family. Part of the 50S ribosomal subunit.

This protein is one of the early assembly proteins of the 50S ribosomal subunit, although it is not seen to bind rRNA by itself. It is important during the early stages of 50S assembly. This chain is Large ribosomal subunit protein uL13, found in Pseudomonas syringae pv. syringae (strain B728a).